Reading from the N-terminus, the 399-residue chain is Transmembrane protein 237 homolog (399 aa).

The span at 1 to 11 (MPPTSRPVPPP) shows a compositional bias: pro residues. The tract at residues 1 to 158 (MPPTSRPVPP…PHDKRNMPAK (158 aa)) is disordered. Composition is skewed to basic and acidic residues over residues 36 to 45 (NQQRRFRENN), 111 to 135 (EAAK…DPRR), and 144 to 158 (KSFR…MPAK). A run of 4 helical transmembrane segments spans residues 222 to 242 (IANI…IFSF), 256 to 276 (MSLP…VSAI), 301 to 321 (GLIT…CIQL), and 343 to 363 (VFNV…AFKP).

The protein belongs to the TMEM237 family.

It is found in the membrane. It localises to the cell projection. The protein resides in the cilium. Component of the transition zone in primary cilia. Required for ciliogenesis. This is Transmembrane protein 237 homolog from Caenorhabditis elegans.